The primary structure comprises 311 residues: Methionyl-tRNA formyltransferase (311 aa).

Serine 110–proline 113 contacts (6S)-5,6,7,8-tetrahydrofolate.

It belongs to the Fmt family.

The enzyme catalyses L-methionyl-tRNA(fMet) + (6R)-10-formyltetrahydrofolate = N-formyl-L-methionyl-tRNA(fMet) + (6S)-5,6,7,8-tetrahydrofolate + H(+). Functionally, attaches a formyl group to the free amino group of methionyl-tRNA(fMet). The formyl group appears to play a dual role in the initiator identity of N-formylmethionyl-tRNA by promoting its recognition by IF2 and preventing the misappropriation of this tRNA by the elongation apparatus. The sequence is that of Methionyl-tRNA formyltransferase from Streptococcus pyogenes serotype M28 (strain MGAS6180).